The chain runs to 123 residues: PCNA-associated factor (123 aa).

The interval 1 to 123 is disordered; sequence MVRTKADCAG…SEEAADSGDE (123 aa). Residues 26-37 carry the D-box motif; the sequence is RKTFGSSSSGSN. The PIP-box motif lies at 66 to 77; that stretch reads QKGIGDFFGSPS. The KEN box motif lies at 83-85; that stretch reads KEN. The short motif at 93–105 is the Initiation motif element; it reads EAGGSGAGKKPRK. A compositionally biased stretch (acidic residues) spans 113 to 123; that stretch reads PSEEAADSGDE.

As to quaternary structure, interacts with pcna.

The protein resides in the nucleus. Its subcellular location is the cytoplasm. The protein localises to the perinuclear region. PCNA-binding protein that acts as a regulator of DNA repair during DNA replication. Following DNA damage, the interaction with pcna is disrupted, facilitating the interaction between monoubiquitinated pcna and the translesion DNA synthesis DNA polymerase eta (polh) at stalled replisomes, facilitating the bypass of replication-fork-blocking lesions. Also acts as a regulator of centrosome number. In Xenopus laevis (African clawed frog), this protein is PCNA-associated factor.